Reading from the N-terminus, the 212-residue chain is Orotate phosphoribosyltransferase (212 aa).

5-phospho-alpha-D-ribose 1-diphosphate contacts are provided by residues Arg97, Lys101, His103, and 123–131 (EDLISTGGS). Ser127 contributes to the orotate binding site.

This sequence belongs to the purine/pyrimidine phosphoribosyltransferase family. PyrE subfamily. In terms of assembly, homodimer. The cofactor is Mg(2+).

It catalyses the reaction orotidine 5'-phosphate + diphosphate = orotate + 5-phospho-alpha-D-ribose 1-diphosphate. It functions in the pathway pyrimidine metabolism; UMP biosynthesis via de novo pathway; UMP from orotate: step 1/2. Catalyzes the transfer of a ribosyl phosphate group from 5-phosphoribose 1-diphosphate to orotate, leading to the formation of orotidine monophosphate (OMP). This chain is Orotate phosphoribosyltransferase, found in Bacteroides thetaiotaomicron (strain ATCC 29148 / DSM 2079 / JCM 5827 / CCUG 10774 / NCTC 10582 / VPI-5482 / E50).